The following is a 105-amino-acid chain: D-galactoside-specific lectin (105 aa).

Residues 13 to 103 (VCEDSSLTIS…KYLAVTYICS (91 aa)) enclose the SUEL-type lectin domain.

Homodimer; disulfide-linked.

It is found in the cytoplasm. In terms of biological role, this protein binds D-galactoside. May have an important role in the activation of eggs (triggered by fertilization), or in their subsequent differentiation. The dimeric form is essential for hemagglutination activity. In Heliocidaris crassispina (Sea urchin), this protein is D-galactoside-specific lectin.